The following is a 70-amino-acid chain: ATP synthase subunit c (70 aa).

Transmembrane regions (helical) follow at residues 4–24 (IAAA…NGLI) and 45–65 (LMFI…VIAF).

This sequence belongs to the ATPase C chain family. F-type ATPases have 2 components, F(1) - the catalytic core - and F(0) - the membrane proton channel. F(1) has five subunits: alpha(3), beta(3), gamma(1), delta(1), epsilon(1). F(0) has three main subunits: a(1), b(2) and c(10-14). The alpha and beta chains form an alternating ring which encloses part of the gamma chain. F(1) is attached to F(0) by a central stalk formed by the gamma and epsilon chains, while a peripheral stalk is formed by the delta and b chains.

It localises to the cell membrane. In terms of biological role, f(1)F(0) ATP synthase produces ATP from ADP in the presence of a proton or sodium gradient. F-type ATPases consist of two structural domains, F(1) containing the extramembraneous catalytic core and F(0) containing the membrane proton channel, linked together by a central stalk and a peripheral stalk. During catalysis, ATP synthesis in the catalytic domain of F(1) is coupled via a rotary mechanism of the central stalk subunits to proton translocation. Key component of the F(0) channel; it plays a direct role in translocation across the membrane. A homomeric c-ring of between 10-14 subunits forms the central stalk rotor element with the F(1) delta and epsilon subunits. The sequence is that of ATP synthase subunit c from Bacillus licheniformis (strain ATCC 14580 / DSM 13 / JCM 2505 / CCUG 7422 / NBRC 12200 / NCIMB 9375 / NCTC 10341 / NRRL NRS-1264 / Gibson 46).